Reading from the N-terminus, the 527-residue chain is DNA polymerase epsilon subunit 2 (527 aa).

The protein belongs to the DNA polymerase epsilon subunit B family. Component of the DNA polymerase epsilon complex consisting of four subunits: the catalytic subunit POLE and the accessory subunits POLE2, POLE3 and POLE4.

It localises to the nucleus. Its function is as follows. Accessory component of the DNA polymerase epsilon complex. Participates in DNA repair and in chromosomal DNA replication. The sequence is that of DNA polymerase epsilon subunit 2 from Homo sapiens (Human).